Here is a 1383-residue protein sequence, read N- to C-terminus: DNA-directed RNA polymerase subunit beta (1383 aa).

The protein belongs to the RNA polymerase beta chain family. In terms of assembly, the RNAP catalytic core consists of 2 alpha, 1 beta, 1 beta' and 1 omega subunit. When a sigma factor is associated with the core the holoenzyme is formed, which can initiate transcription.

The catalysed reaction is RNA(n) + a ribonucleoside 5'-triphosphate = RNA(n+1) + diphosphate. Its function is as follows. DNA-dependent RNA polymerase catalyzes the transcription of DNA into RNA using the four ribonucleoside triphosphates as substrates. The chain is DNA-directed RNA polymerase subunit beta from Bartonella bacilliformis (strain ATCC 35685 / KC583 / Herrer 020/F12,63).